The following is a 358-amino-acid chain: tRNA-specific 2-thiouridylase MnmA (358 aa).

ATP contacts are provided by residues 6-13 (ALSGGVDS) and methionine 32. Cysteine 103 functions as the Nucleophile in the catalytic mechanism. Cysteine 103 and cysteine 201 are joined by a disulfide. Glycine 127 lines the ATP pocket. Residues 151-153 (KDQ) form an interaction with tRNA region. The Cysteine persulfide intermediate role is filled by cysteine 201.

This sequence belongs to the MnmA/TRMU family.

It localises to the cytoplasm. The enzyme catalyses S-sulfanyl-L-cysteinyl-[protein] + uridine(34) in tRNA + AH2 + ATP = 2-thiouridine(34) in tRNA + L-cysteinyl-[protein] + A + AMP + diphosphate + H(+). Catalyzes the 2-thiolation of uridine at the wobble position (U34) of tRNA, leading to the formation of s(2)U34. This chain is tRNA-specific 2-thiouridylase MnmA, found in Thermotoga neapolitana (strain ATCC 49049 / DSM 4359 / NBRC 107923 / NS-E).